The sequence spans 161 residues: Allophycocyanin beta chain (161 aa).

Asn-71 is modified (N4-methylasparagine). Cys-81 is a (2R,3E)-phycocyanobilin binding site.

The protein belongs to the phycobiliprotein family. As to quaternary structure, heterodimer of an alpha and a beta chain. Contains one covalently linked phycocyanobilin chromophore.

Its subcellular location is the cellular thylakoid membrane. Functionally, light-harvesting photosynthetic bile pigment-protein from the phycobiliprotein complex. Allophycocyanin has a maximum absorption at approximately 650 nanometers. The polypeptide is Allophycocyanin beta chain (apcB) (Anabaena variabilis).